We begin with the raw amino-acid sequence, 369 residues long: 3-isopropylmalate dehydrogenase (369 aa).

NAD(+) is bound at residue 77–90 (GPKYDVLDFSVKPE). Residues Arg97, Arg107, Arg135, and Asp226 each coordinate substrate. The Mg(2+) site is built by Asp226, Asp250, and Asp254. 289–301 (GSAPDIAGQGKAN) provides a ligand contact to NAD(+).

The protein belongs to the isocitrate and isopropylmalate dehydrogenases family. LeuB type 1 subfamily. As to quaternary structure, homodimer. The cofactor is Mg(2+). Requires Mn(2+) as cofactor.

It localises to the cytoplasm. It carries out the reaction (2R,3S)-3-isopropylmalate + NAD(+) = 4-methyl-2-oxopentanoate + CO2 + NADH. Its pathway is amino-acid biosynthesis; L-leucine biosynthesis; L-leucine from 3-methyl-2-oxobutanoate: step 3/4. Catalyzes the oxidation of 3-carboxy-2-hydroxy-4-methylpentanoate (3-isopropylmalate) to 3-carboxy-4-methyl-2-oxopentanoate. The product decarboxylates to 4-methyl-2 oxopentanoate. The polypeptide is 3-isopropylmalate dehydrogenase (Cereibacter sphaeroides (strain ATCC 17023 / DSM 158 / JCM 6121 / CCUG 31486 / LMG 2827 / NBRC 12203 / NCIMB 8253 / ATH 2.4.1.) (Rhodobacter sphaeroides)).